The following is a 284-amino-acid chain: 2-dehydro-3-deoxyphosphooctonate aldolase (284 aa).

The protein belongs to the KdsA family.

It is found in the cytoplasm. It catalyses the reaction D-arabinose 5-phosphate + phosphoenolpyruvate + H2O = 3-deoxy-alpha-D-manno-2-octulosonate-8-phosphate + phosphate. Its pathway is carbohydrate biosynthesis; 3-deoxy-D-manno-octulosonate biosynthesis; 3-deoxy-D-manno-octulosonate from D-ribulose 5-phosphate: step 2/3. It participates in bacterial outer membrane biogenesis; lipopolysaccharide biosynthesis. The chain is 2-dehydro-3-deoxyphosphooctonate aldolase from Cronobacter sakazakii (strain ATCC BAA-894) (Enterobacter sakazakii).